A 940-amino-acid chain; its full sequence is Isoleucine--tRNA ligase (940 aa).

The 'HIGH' region motif lies at 58-68 (PYANGDIHIGH). Glu-564 lines the L-isoleucyl-5'-AMP pocket. Residues 605-609 (KMSKS) carry the 'KMSKS' region motif. Lys-608 is a binding site for ATP. 4 residues coordinate Zn(2+): Cys-903, Cys-906, Cys-923, and Cys-926.

Belongs to the class-I aminoacyl-tRNA synthetase family. IleS type 1 subfamily. In terms of assembly, monomer. Zn(2+) serves as cofactor.

The protein resides in the cytoplasm. It carries out the reaction tRNA(Ile) + L-isoleucine + ATP = L-isoleucyl-tRNA(Ile) + AMP + diphosphate. Catalyzes the attachment of isoleucine to tRNA(Ile). As IleRS can inadvertently accommodate and process structurally similar amino acids such as valine, to avoid such errors it has two additional distinct tRNA(Ile)-dependent editing activities. One activity is designated as 'pretransfer' editing and involves the hydrolysis of activated Val-AMP. The other activity is designated 'posttransfer' editing and involves deacylation of mischarged Val-tRNA(Ile). This is Isoleucine--tRNA ligase from Shewanella pealeana (strain ATCC 700345 / ANG-SQ1).